Here is a 159-residue protein sequence, read N- to C-terminus: Transmembrane protein 88 (159 aa).

2 helical membrane-spanning segments follow: residues 43 to 63 (LLLL…MLGF) and 88 to 108 (FTAL…LALA). The disordered stretch occupies residues 137–159 (PQPRQIRASPGSQAVPTSGKVWV).

It belongs to the TMEM88 family. In terms of assembly, interacts (via C-terminus) with DVL1.

The protein resides in the cell membrane. Functionally, inhibits the Wnt/beta-catenin signaling pathway. Crucial for heart development and acts downstream of GATA factors in the pre-cardiac mesoderm to specify lineage commitment of cardiomyocyte development. In Homo sapiens (Human), this protein is Transmembrane protein 88 (TMEM88).